The following is a 361-amino-acid chain: Chorismate synthase (361 aa).

NADP(+) is bound by residues Arg-48 and Arg-54. FMN-binding positions include 131–133 (RSS), 243–244 (NA), Gly-287, 302–306 (KPTSS), and Arg-328.

This sequence belongs to the chorismate synthase family. Homotetramer. Requires FMNH2 as cofactor.

The catalysed reaction is 5-O-(1-carboxyvinyl)-3-phosphoshikimate = chorismate + phosphate. The protein operates within metabolic intermediate biosynthesis; chorismate biosynthesis; chorismate from D-erythrose 4-phosphate and phosphoenolpyruvate: step 7/7. Functionally, catalyzes the anti-1,4-elimination of the C-3 phosphate and the C-6 proR hydrogen from 5-enolpyruvylshikimate-3-phosphate (EPSP) to yield chorismate, which is the branch point compound that serves as the starting substrate for the three terminal pathways of aromatic amino acid biosynthesis. This reaction introduces a second double bond into the aromatic ring system. This chain is Chorismate synthase, found in Rhodopseudomonas palustris (strain HaA2).